A 281-amino-acid polypeptide reads, in one-letter code: Protein synthesis inhibitor I (281 aa).

Ala2 is subject to N-acetylalanine. Residue Glu175 is part of the active site.

Belongs to the ribosome-inactivating protein family. Type 1 RIP subfamily.

The protein resides in the cytoplasm. The catalysed reaction is Endohydrolysis of the N-glycosidic bond at one specific adenosine on the 28S rRNA.. Its function is as follows. Inhibits the elongation phase of protein synthesis. It inactivates fungal ribosomes even more effectively than mammalian ribosomes and is thought to function as a constitutive antifungal agent in plants. The sequence is that of Protein synthesis inhibitor I (RIP30) from Hordeum vulgare (Barley).